The primary structure comprises 531 residues: Polyamine transporter PUT1 (531 aa).

The interval 1–76 is disordered; the sequence is MADTGGRPEV…LPDGDAGGPM (76 aa). The span at 17–33 shows a compositional bias: low complexity; it reads SPGHPAASTTAAAAADL. Basic and acidic residues predominate over residues 34–44; the sequence is GHADTGQEKPT. Helical transmembrane passes span 83-103, 113-133, 147-167, 193-213, 224-244, 262-284, 296-316, 341-361, 391-411, 414-434, 453-473, and 476-496; these read VSMI…PFGI, LLAI…EALI, YVVW…GWMK, LGGG…LTLL, VAIC…LIAL, WNLY…TLAG, ALFY…LAGT, AWLM…MFVA, TPLA…MMSF, IVAA…VAFI, TAGC…VLAL, and LKVA…QPAL.

This sequence belongs to the amino acid-polyamine-organocation (APC) superfamily. Polyamine:cation symporter (PHS) (TC 2.A.3.12) family. Expressed in seedling roots, leaves, stems, flowers and siliques.

It is found in the cell membrane. Cell membrane polyamine/proton symporter involved in the polyamine uptake in cells. Possesses high affinity for spermidine and lower affinity for spermine and putrescine. Transports paraquat, a polyamine analog, and thus confers sensitivity to this chemical which is used as a herbicide. The chain is Polyamine transporter PUT1 (PUT1) from Oryza sativa subsp. japonica (Rice).